Consider the following 469-residue polypeptide: Programmed cell death protein 4 (469 aa).

At Met-1 the chain carries N-acetylmethionine. Residues Met-1–Leu-23 are compositionally biased toward polar residues. 2 disordered regions span residues Met-1–Lys-37 and Lys-58–Gly-128. Phosphoserine is present on Ser-25. The Nuclear localization signal signature appears at Lys-58–Arg-64. Ser-67 carries the post-translational modification Phosphoserine; by PKB and RPS6KB1. Phosphoserine is present on residues Ser-68, Ser-71, Ser-76, Ser-78, and Ser-94. A Phosphodegron motif is present at residues Asp-70–Ser-76. Gly residues predominate over residues Lys-114–Gly-125. Tyr-152 is subject to Phosphotyrosine. Positions Ala-163–Gly-284 constitute an MI 1 domain. Residues Ser-313 and Ser-317 each carry the phosphoserine modification. The MI 2 domain occupies His-326–Ser-449. The short motif at Pro-448–Arg-454 is the Nuclear localization signal element. At Ser-457 the chain carries Phosphoserine; by PKB.

It belongs to the PDCD4 family. As to quaternary structure, interacts (via MI domains) with EIF4A1 and EIF4A2 (via N-terminal domain). Heterotrimer with EIF4A1; one molecule of PDCD4 binds two molecules of EIF4A1. Interacts with EIF4G1. May form a complex with EIF4A1 and EIF4G1. The interaction between PDCD4 and EIF4A1 interferes with the interaction between EIF4A1 and EIF4G. When phosphorylated, interacts with BTRC and FBXW11. Polyubiquitinated, leading to its proteasomal degradation. Rapidly degraded in response to mitogens. Phosphorylation of the phosphodegron promotes interaction with BTRC and proteasomal degradation. In terms of processing, phosphorylated at Ser-67 by RPS6KB1 in response to mitogens; phosphorylation promotes proteasomal degradation of PDCD4. In terms of tissue distribution, expressed ubiquitously. Highyly expressed in thymus and liver. Moderately expressed in brain, kidney and spleen; weakly in lung and heart. Expression is up- or down-regulated in response to apoptosis inducers. Regulated by many programmed cell death-inducing stimuli.

The protein resides in the nucleus. It is found in the cytoplasm. In terms of biological role, inhibits translation initiation and cap-dependent translation. May excert its function by hindering the interaction between EIF4A1 and EIF4G. Inhibits the helicase activity of EIF4A. Modulates the activation of JUN kinase. Down-regulates the expression of MAP4K1, thus inhibiting events important in driving invasion, namely, MAPK85 activation and consequent JUN-dependent transcription. May play a role in apoptosis. Tumor suppressor. Inhibits tumor promoter-induced neoplastic transformation. Binds RNA. This Mus musculus (Mouse) protein is Programmed cell death protein 4 (Pdcd4).